A 395-amino-acid polypeptide reads, in one-letter code: GPI-anchor transamidase (395 aa).

Residues 1-27 form the signal peptide; the sequence is MAAPCFLTLRVATLAALALLSLGSSAA. The Lumenal portion of the chain corresponds to 28-368; it reads GHIEDQAEQF…PKPRDWHPPG (341 aa). Ca(2+)-binding residues include aspartate 79, isoleucine 82, glutamate 118, and aspartate 120. Histidine 164 (proton donor) is an active-site residue. Cysteine 206 acts as the Nucleophile; acyl-thioester intermediate in catalysis. A protein contacts are provided by cysteine 206, serine 232, and serine 234. The interval 231–236 is autoinhibitory loop; it reads DSLSHQ. A disulfide bridge links cysteine 275 with cysteine 280. A helical transmembrane segment spans residues 369-385; sequence GFILGLWALIIMVFFKT. Topologically, residues 386 to 395 are cytoplasmic; the sequence is YGIKHMKFIF.

It belongs to the peptidase C13 family. Heteropentamer. Part of the GPI-anchor transamidase complex, consisting of PIGK, PIGT, PIGS, PIGU and GAA1. Interacts with GPAA1. Interacts with PIGT; this interaction, via a disulfide link, stabilizes the expression of GAA1 and PIGK and links them to PIGS. The disulfide bond between PIGK/GPI8 and PIGT is important for normal enzyme activity.

The protein resides in the endoplasmic reticulum membrane. The protein operates within glycolipid biosynthesis; glycosylphosphatidylinositol-anchor biosynthesis. In the absence of proproteins substrates, exists in an inactive state with a disrupted catalytic site by an autoinhibitory loop. The binding of proprotein substrates, particularly the CSP region, to GPI-T triggers concerted conformational changes that alleviate the inhibition by the autoinhibitory loop. Meanwhile, proprotein residues near the omega- site induce the formation of a catalytic cleft for catalysis, following which the products are released and GPI-T reverts to the inactive state. Its function is as follows. Catalytic subunit of the glycosylphosphatidylinositol-anchor (GPI-anchor) transamidase (GPI-T) complex that catalyzes the formation of the linkage between a proprotein and a GPI-anchor and participates in GPI anchored protein biosynthesis. Recognizes diverse proproteins at a C-terminal signal peptide (CSP) region that lacks consensus sequence and replaces it with a GPI-anchor via a transamidation reaction. Transamidation catalysis reaction follows a two-phase mechanism. In the acyl-enzyme phase, the carbonyl group of the proproteins's omega-site undergoes a nucleophilic attack forming an enzyme-substrate thioester bond. Followed by a general acid catalysis that allows CSP releasing, regenerating the carbonyl, and forming the acyl-enzyme intermediate. In the GPI-anchor attachment phase, the amino group of the GPI-anchor's ethanolamine phosphate, the one on third mannose (EtNP3), mediates a nucleophilic attack on the carbonyl of the acyl-enzyme intermediate, replacing the CSP, allowing GPI-anchor attachment to the omega-residue, therefore forming the product and freeing the enzyme. The polypeptide is GPI-anchor transamidase (Mus musculus (Mouse)).